Consider the following 605-residue polypeptide: UPF0313 protein GSU2873 (605 aa).

Positions 291–561 constitute a Radical SAM core domain; sequence AYEQIRASVT…LQKALLLWHL (271 aa). 3 residues coordinate [4Fe-4S] cluster: C305, C309, and C312. Positions 586 to 605 are disordered; sequence GGAAGGGGGRSGSGFRPGRT. Residues 587–597 are compositionally biased toward gly residues; the sequence is GAAGGGGGRSG.

Belongs to the UPF0313 family. It depends on [4Fe-4S] cluster as a cofactor.

This is UPF0313 protein GSU2873 from Geobacter sulfurreducens (strain ATCC 51573 / DSM 12127 / PCA).